The sequence spans 152 residues: Spermine/spermidine N(1)-acetyltransferase (152 aa).

Residues 3-152 enclose the N-acetyltransferase domain; that stretch reads INIKAVTDDN…NGEKVMVKEL (150 aa). Acetyl-CoA contacts are provided by residues 82–84, 89–95, and 122–131; these read FFI, QGKGLGK, and NIHAIRLYQR. Tyr129 functions as the Proton donor in the catalytic mechanism.

Belongs to the acetyltransferase family.

The enzyme catalyses an alkane-alpha,omega-diamine + acetyl-CoA = an N-acetylalkane-alpha,omega-diamine + CoA + H(+). The catalysed reaction is spermine + acetyl-CoA = N(1)-acetylspermine + CoA + H(+). It catalyses the reaction spermidine + acetyl-CoA = N(1)-acetylspermidine + CoA + H(+). Its pathway is amine and polyamine degradation; spermine degradation. It functions in the pathway amine and polyamine degradation; spermidine degradation. Putrescine and N(8)-acetylspermidine are competitive inhibitors of spermidine acetylation. Acetylates both spermidine and spermine at primary propyl amine moieties, with spermine being the preferred substrate. This Bacillus subtilis (strain 168) protein is Spermine/spermidine N(1)-acetyltransferase (bltD).